The sequence spans 155 residues: Short-chain-enoyl-CoA hydratase (155 aa).

It belongs to the enoyl-CoA hydratase/isomerase family.

The catalysed reaction is a short-chain (3S)-3-hydroxyacyl-CoA = a short-chain (2E)-enoyl-CoA + H2O. It functions in the pathway lipid metabolism; butanoate metabolism. The sequence is that of Short-chain-enoyl-CoA hydratase (crt) from Clostridioides difficile (Peptoclostridium difficile).